Consider the following 561-residue polypeptide: Putative pectinesterase/pectinesterase inhibitor 24 (561 aa).

The helical transmembrane segment at 26-46 threads the bilayer; that stretch reads IAIIAVSLVILAGIVIGAVFG. Residues 64-211 are pectinesterase inhibitor 24; sequence DSISVSVKAV…TELTSNALAI (148 aa). N-linked (GlcNAc...) asparagine glycosylation is found at N92, N130, N148, and N200. Residues 255–548 are pectinesterase 24; the sequence is DIVVAKDGSG…TVKPFIDGGR (294 aa). Positions 330 and 360 each coordinate substrate. Residue D383 is the Proton donor; for pectinesterase activity of the active site. C397 and C417 are joined by a disulfide. D404 (nucleophile; for pectinesterase activity) is an active-site residue. Residues R468 and W470 each contribute to the substrate site. N472 carries N-linked (GlcNAc...) asparagine glycosylation.

It in the N-terminal section; belongs to the PMEI family. In the C-terminal section; belongs to the pectinesterase family.

It is found in the membrane. The enzyme catalyses [(1-&gt;4)-alpha-D-galacturonosyl methyl ester](n) + n H2O = [(1-&gt;4)-alpha-D-galacturonosyl](n) + n methanol + n H(+). It participates in glycan metabolism; pectin degradation; 2-dehydro-3-deoxy-D-gluconate from pectin: step 1/5. In terms of biological role, acts in the modification of cell walls via demethylesterification of cell wall pectin. This Arabidopsis thaliana (Mouse-ear cress) protein is Putative pectinesterase/pectinesterase inhibitor 24 (PME24).